The primary structure comprises 609 residues: Granule-bound starch synthase 1, chloroplastic/amyloplastic (609 aa).

The N-terminal 77 residues, 1-77 (MSALTTSQLA…SRRFPSVVVY (77 aa)), are a transit peptide targeting the chloroplast. Positions 29 to 67 (RHGFQGLKPRSPAGGDATSLSVTTSARATPKQQRSVQRG) are disordered. A compositionally biased stretch (polar residues) spans 46–66 (TSLSVTTSARATPKQQRSVQR). Lys97 contributes to the ADP-alpha-D-glucose binding site.

The protein belongs to the glycosyltransferase 1 family. Bacterial/plant glycogen synthase subfamily.

The protein resides in the plastid. It is found in the chloroplast. It localises to the amyloplast. The enzyme catalyses an NDP-alpha-D-glucose + [(1-&gt;4)-alpha-D-glucosyl](n) = [(1-&gt;4)-alpha-D-glucosyl](n+1) + a ribonucleoside 5'-diphosphate + H(+). It functions in the pathway glycan biosynthesis; starch biosynthesis. In terms of biological role, required for the synthesis of amylose in endosperm. The chain is Granule-bound starch synthase 1, chloroplastic/amyloplastic (WAXY) from Oryza glaberrima (African rice).